The chain runs to 708 residues: G-box-binding factor (708 aa).

Disordered regions lie at residues 1-29 (MLST…GSDL) and 123-339 (QQAQ…QTIP). 3 stretches are compositionally biased toward low complexity: residues 11–21 (SSSSSSSSSPS), 123–219 (QQAQ…QHHQ), and 227–316 (SQPQ…SPST). Positions 324–333 (ETSNSEKKDS) are enriched in basic and acidic residues. Tandem repeats lie at residues 339–368 (PKCT…AFTP) and 481–510 (PPCP…PFTP). Residues 511-604 (VGAGLSPSSS…PTYSPNPSLP (94 aa)) form a disordered region. Low complexity predominate over residues 516-590 (SPSSSPSSPK…SSISQSPLQL (75 aa)). The segment covering 591–600 (NYQTPTYSPN) has biased composition (polar residues).

The protein localises to the nucleus. Its function is as follows. cAMP-responsive transcriptional activator regulating late gene expression. Essential component of the developmental switch between early and late development. Binds to a number of CA/GT-rich gene regulatory elements. The polypeptide is G-box-binding factor (gbfA) (Dictyostelium discoideum (Social amoeba)).